Consider the following 473-residue polypeptide: ATP synthase subunit beta 2 (473 aa).

158–165 (GGAGVGKT) is a binding site for ATP.

The protein belongs to the ATPase alpha/beta chains family. F-type ATPases have 2 components, CF(1) - the catalytic core - and CF(0) - the membrane proton channel. CF(1) has five subunits: alpha(3), beta(3), gamma(1), delta(1), epsilon(1). CF(0) has three main subunits: a(1), b(2) and c(9-12). The alpha and beta chains form an alternating ring which encloses part of the gamma chain. CF(1) is attached to CF(0) by a central stalk formed by the gamma and epsilon chains, while a peripheral stalk is formed by the delta and b chains.

It is found in the cell membrane. It catalyses the reaction ATP + H2O + 4 H(+)(in) = ADP + phosphate + 5 H(+)(out). Its function is as follows. Produces ATP from ADP in the presence of a proton gradient across the membrane. The catalytic sites are hosted primarily by the beta subunits. This Listeria welshimeri serovar 6b (strain ATCC 35897 / DSM 20650 / CCUG 15529 / CIP 8149 / NCTC 11857 / SLCC 5334 / V8) protein is ATP synthase subunit beta 2.